A 769-amino-acid polypeptide reads, in one-letter code: Serine protease HtrA-like (769 aa).

Residues 1 to 20 show a composition bias toward basic residues; the sequence is MDIGKKHVIPKSQYRRKRRE. The interval 1-388 is disordered; it reads MDIGKKHVIP…KKATSKLNKG (388 aa). Basic and acidic residues-rich tracts occupy residues 21 to 64, 71 to 87, and 96 to 108; these read FFHN…ERFK, LEQR…EESK, and YNKD…DVSK. Residues 126 to 139 are compositionally biased toward polar residues; the sequence is YEQNTEATLSTNST. Positions 140-186 are enriched in basic and acidic residues; the sequence is DKVESTDMRKLSSDKNKVGHEEQHVLSKPSEHDKETRIDFESSRTDS. A compositionally biased stretch (polar residues) spans 247–262; the sequence is QQSQNEQTKTYTYGDS. Basic and acidic residues-rich tracts occupy residues 264-296 and 310-330; these read QNDK…HIVD and KIDD…HKQN. Polar residues predominate over residues 331-347; that stretch reads ADSSETVGYQSQSSASH. Over residues 348 to 364 the composition is skewed to basic and acidic residues; it reads RSTEKRNMAINDHDKLN. Over residues 366–388 the composition is skewed to polar residues; sequence QKPNTKTSANNNQKKATSKLNKG. The helical transmembrane segment at 410-430 threads the bilayer; that stretch reads LVILMGIIILIVILNAIFNNV. Residues His-504, Asp-534, and Ser-619 each act as charge relay system in the active site. The region spanning 680–733 is the PDZ domain; sequence IASLNSFERQAVKLLGKVKNGVVVDQVDNNGLADQSGLKKGDVITELDGKLLED.

This sequence belongs to the peptidase S1C family.

It is found in the cell membrane. This is Serine protease HtrA-like from Staphylococcus aureus (strain MRSA252).